Here is a 1050-residue protein sequence, read N- to C-terminus: Atrial natriuretic peptide receptor 2 (1050 aa).

Residues 1–19 (MDLGHSLFVVFTCFLMARC) form the signal peptide. The Extracellular portion of the chain corresponds to 20 to 460 (RTEIGKNITV…FCNEDQLPVL (441 aa)). N-linked (GlcNAc...) asparagine glycosylation is found at N26 and N74. A disulfide bridge connects residues C84 and C110. 6 N-linked (GlcNAc...) asparagine glycosylation sites follow: N169, N203, N285, N352, N366, and N415. An intrachain disulfide couples C236 to C339. A helical membrane pass occupies residues 461 to 481 (GIVAVGSGLALIIFGISSFLI). Residues 482–1050 (YRKLKLEKEL…LGEKTDVYVI (569 aa)) lie on the Cytoplasmic side of the membrane. The region spanning 517-790 (SRLTISQRGS…PDFSYIKIFV (274 aa)) is the Protein kinase domain. The Guanylate cyclase domain maps to 865 to 995 (TIYFSDIVGF…DTVNTASRME (131 aa)).

This sequence belongs to the adenylyl cyclase class-4/guanylyl cyclase family. In terms of processing, phosphorylated. Phosphorylation of the protein kinase-like domain is required for full activation by CNP. Glycosylated. In terms of tissue distribution, high levels found in liver, atrium and gill. Moderate levels found in brain and ventricle, and low levels in esophageal sphincter, stomach, posterior intestine and kidney.

Its subcellular location is the cell membrane. It catalyses the reaction GTP = 3',5'-cyclic GMP + diphosphate. Receptor for the C-type natriuretic peptide NPPC/CNP hormone. Has guanylate cyclase activity upon binding of its ligand. May play a role in the regulation of skeletal growth. This chain is Atrial natriuretic peptide receptor 2 (npr2), found in Anguilla japonica (Japanese eel).